A 231-amino-acid chain; its full sequence is MSTAPLYTVVVPAAGIGQRMQADRPKQYLTIAGKTILEHTLENLYAHPQIEQIIVAINPLDQYFDSLPIASKTWVKRVDGGGERADSVLAGLNSLQNADWVLVHDAARPCLAQDDLSKLLATAEHSEHGAILACRVRDTMKRGNSSHDILHTESRDNLWHALTPQFFPLDALRSALGQAMAQGIEITDEASAIEWVQGKVHLVEGRSSNIKVTQPEDLHLAEFYLQHKATL.

This sequence belongs to the IspD/TarI cytidylyltransferase family. IspD subfamily.

It catalyses the reaction 2-C-methyl-D-erythritol 4-phosphate + CTP + H(+) = 4-CDP-2-C-methyl-D-erythritol + diphosphate. It functions in the pathway isoprenoid biosynthesis; isopentenyl diphosphate biosynthesis via DXP pathway; isopentenyl diphosphate from 1-deoxy-D-xylulose 5-phosphate: step 2/6. Its function is as follows. Catalyzes the formation of 4-diphosphocytidyl-2-C-methyl-D-erythritol from CTP and 2-C-methyl-D-erythritol 4-phosphate (MEP). In Pseudoalteromonas atlantica (strain T6c / ATCC BAA-1087), this protein is 2-C-methyl-D-erythritol 4-phosphate cytidylyltransferase.